We begin with the raw amino-acid sequence, 122 residues long: Large ribosomal subunit protein uL14 (122 aa).

Belongs to the universal ribosomal protein uL14 family. Part of the 50S ribosomal subunit. Forms a cluster with proteins L3 and L19. In the 70S ribosome, L14 and L19 interact and together make contacts with the 16S rRNA in bridges B5 and B8.

In terms of biological role, binds to 23S rRNA. Forms part of two intersubunit bridges in the 70S ribosome. The sequence is that of Large ribosomal subunit protein uL14 from Ralstonia nicotianae (strain ATCC BAA-1114 / GMI1000) (Ralstonia solanacearum).